The chain runs to 338 residues: Methionyl-tRNA formyltransferase (338 aa).

Residue 110–113 (SLLP) coordinates (6S)-5,6,7,8-tetrahydrofolate.

It belongs to the Fmt family.

The catalysed reaction is L-methionyl-tRNA(fMet) + (6R)-10-formyltetrahydrofolate = N-formyl-L-methionyl-tRNA(fMet) + (6S)-5,6,7,8-tetrahydrofolate + H(+). Attaches a formyl group to the free amino group of methionyl-tRNA(fMet). The formyl group appears to play a dual role in the initiator identity of N-formylmethionyl-tRNA by promoting its recognition by IF2 and preventing the misappropriation of this tRNA by the elongation apparatus. This Parasynechococcus marenigrum (strain WH8102) protein is Methionyl-tRNA formyltransferase.